The following is a 622-amino-acid chain: Mitochondrial distribution and morphology protein 34 (622 aa).

The 195-residue stretch at 1–195 (MAFNFNWSPL…LPAIIHRLSL (195 aa)) folds into the SMP-LTD domain. 6 disordered regions span residues 211–234 (QVTNPPLEGPGLDPLLNPPEDPVD), 303–322 (PSGLVSPMSPPLSRTHSHVA), 355–432 (SMGA…IRQP), 445–464 (ERNARRGIPAEFGHDIPASR), 482–546 (SLQQ…QTHL), and 581–622 (KMGG…AYRH). Low complexity predominate over residues 214–225 (NPPLEGPGLDPL). Basic residues predominate over residues 360–372 (RHSKAHARKRKKR). The span at 373–384 (VVDLRRRPKNTD) shows a compositional bias: basic and acidic residues. Residues 388-404 (SVSGESEFTESTSAASV) show a composition bias toward low complexity. Composition is skewed to polar residues over residues 482-495 (SLQQQLHPANSKSL) and 522-532 (NASNYTSSGDS). Composition is skewed to low complexity over residues 533–543 (QQQQQQQQQHQ) and 592–601 (NNKNDNKNNN).

It belongs to the MDM34 family. In terms of assembly, component of the ER-mitochondria encounter structure (ERMES) or MDM complex, composed of MMM1, MDM10, MDM12 and MDM34.

The protein localises to the mitochondrion outer membrane. Functionally, component of the ERMES/MDM complex, which serves as a molecular tether to connect the endoplasmic reticulum (ER) and mitochondria. Components of this complex are involved in the control of mitochondrial shape and protein biogenesis, and function in nonvesicular lipid trafficking between the ER and mitochondria. MDM34 is required for the interaction of the ER-resident membrane protein MMM1 and the outer mitochondrial membrane-resident beta-barrel protein MDM10. The protein is Mitochondrial distribution and morphology protein 34 of Ajellomyces capsulatus (strain G186AR / H82 / ATCC MYA-2454 / RMSCC 2432) (Darling's disease fungus).